Here is a 618-residue protein sequence, read N- to C-terminus: Dihydroxy-acid dehydratase (618 aa).

Asp-81 lines the Mg(2+) pocket. [2Fe-2S] cluster is bound at residue Cys-122. Mg(2+) contacts are provided by Asp-123 and Lys-124. Lys-124 is modified (N6-carboxylysine). A [2Fe-2S] cluster-binding site is contributed by Cys-195. Residue Glu-492 participates in Mg(2+) binding. The active-site Proton acceptor is the Ser-518.

It belongs to the IlvD/Edd family. Homodimer. [2Fe-2S] cluster serves as cofactor. The cofactor is Mg(2+).

It carries out the reaction (2R)-2,3-dihydroxy-3-methylbutanoate = 3-methyl-2-oxobutanoate + H2O. The catalysed reaction is (2R,3R)-2,3-dihydroxy-3-methylpentanoate = (S)-3-methyl-2-oxopentanoate + H2O. The protein operates within amino-acid biosynthesis; L-isoleucine biosynthesis; L-isoleucine from 2-oxobutanoate: step 3/4. It participates in amino-acid biosynthesis; L-valine biosynthesis; L-valine from pyruvate: step 3/4. Functionally, functions in the biosynthesis of branched-chain amino acids. Catalyzes the dehydration of (2R,3R)-2,3-dihydroxy-3-methylpentanoate (2,3-dihydroxy-3-methylvalerate) into 2-oxo-3-methylpentanoate (2-oxo-3-methylvalerate) and of (2R)-2,3-dihydroxy-3-methylbutanoate (2,3-dihydroxyisovalerate) into 2-oxo-3-methylbutanoate (2-oxoisovalerate), the penultimate precursor to L-isoleucine and L-valine, respectively. This Zymomonas mobilis subsp. mobilis (strain ATCC 31821 / ZM4 / CP4) protein is Dihydroxy-acid dehydratase.